The chain runs to 449 residues: UDP-N-acetylmuramate--L-alanine ligase (449 aa).

121 to 127 lines the ATP pocket; sequence GAHGKSS.

This sequence belongs to the MurCDEF family.

The protein localises to the cytoplasm. The enzyme catalyses UDP-N-acetyl-alpha-D-muramate + L-alanine + ATP = UDP-N-acetyl-alpha-D-muramoyl-L-alanine + ADP + phosphate + H(+). It functions in the pathway cell wall biogenesis; peptidoglycan biosynthesis. Functionally, cell wall formation. The protein is UDP-N-acetylmuramate--L-alanine ligase of Helicobacter pylori (strain J99 / ATCC 700824) (Campylobacter pylori J99).